The following is a 275-amino-acid chain: Diaminopimelate epimerase (275 aa).

Asparagine 13, glutamine 46, and asparagine 66 together coordinate substrate. Cysteine 75 functions as the Proton donor in the catalytic mechanism. Substrate is bound by residues 76-77, asparagine 159, asparagine 192, and 210-211; these read GN and ER. Cysteine 219 serves as the catalytic Proton acceptor. Substrate is bound at residue 220-221; that stretch reads GT.

The protein belongs to the diaminopimelate epimerase family. As to quaternary structure, homodimer.

The protein localises to the cytoplasm. The enzyme catalyses (2S,6S)-2,6-diaminopimelate = meso-2,6-diaminopimelate. Its pathway is amino-acid biosynthesis; L-lysine biosynthesis via DAP pathway; DL-2,6-diaminopimelate from LL-2,6-diaminopimelate: step 1/1. Its function is as follows. Catalyzes the stereoinversion of LL-2,6-diaminopimelate (L,L-DAP) to meso-diaminopimelate (meso-DAP), a precursor of L-lysine and an essential component of the bacterial peptidoglycan. The polypeptide is Diaminopimelate epimerase (Psychromonas ingrahamii (strain DSM 17664 / CCUG 51855 / 37)).